The sequence spans 323 residues: ADP-ribose glycohydrolase MACROD1 (323 aa).

Residues Lys-94, Lys-101, and Lys-127 each carry the N6-succinyllysine modification. Lys-136 participates in a covalent cross-link: Glycyl lysine isopeptide (Lys-Gly) (interchain with G-Cter in SUMO2). The Macro domain occupies Asp-139–Phe-320. Gly-157–Ile-159 contacts substrate. Lys-161 is modified (N6-acetyllysine). Substrate is bound by residues Ala-170–Asn-172, Gly-177–Asp-182, Ile-265–Gly-271, and Phe-304.

This sequence belongs to the MacroD-type family. MacroD1/2-like subfamily. In terms of assembly, interacts with ESR1; Interacts in a manner that is estrogen independent but is enhanced by estrogen. Interacts (via macro domain) with AR.

Its subcellular location is the nucleus. It catalyses the reaction 3''-O-acetyl-ADP-D-ribose + H2O = ADP-D-ribose + acetate + H(+). The catalysed reaction is 2''-O-acetyl-ADP-D-ribose + H2O = ADP-D-ribose + acetate + H(+). It carries out the reaction 4-O-(ADP-D-ribosyl)-L-aspartyl-[protein] + H2O = L-aspartyl-[protein] + ADP-D-ribose + H(+). The enzyme catalyses 5-O-(ADP-D-ribosyl)-L-glutamyl-[protein] + H2O = L-glutamyl-[protein] + ADP-D-ribose + H(+). It catalyses the reaction alpha-NAD(+) + H2O = ADP-D-ribose + nicotinamide + H(+). Subject to competitive inhibition by the product ADP-ribose. Removes ADP-ribose from aspartate and glutamate residues in proteins bearing a single ADP-ribose moiety. Inactive towards proteins bearing poly-ADP-ribose. Deacetylates O-acetyl-ADP ribose, a signaling molecule generated by the deacetylation of acetylated lysine residues in histones and other proteins. Plays a role in estrogen signaling. Binds to androgen receptor (AR) and amplifies the transactivation function of AR in response to androgen. May play an important role in carcinogenesis and/or progression of hormone-dependent cancers by feed-forward mechanism that activates ESR1 transactivation. Could be an ESR1 coactivator, providing a positive feedback regulatory loop for ESR1 signal transduction. Could be involved in invasive growth by down-regulating CDH1 in endometrial cancer cells. Enhances ESR1-mediated transcription activity. This Mus musculus (Mouse) protein is ADP-ribose glycohydrolase MACROD1.